A 1166-amino-acid chain; its full sequence is Zinc finger CCHC domain-containing protein 2 (1166 aa).

Disordered stretches follow at residues 1–85, 205–240, 550–668, and 904–982; these read MLRM…GGHA, RAEGSRGSVEDEPSGDGEQDAEKDGPGPEGSGCAKL, SSAD…ARFS, and PASF…ISAV. The span at 43-64 shows a compositional bias: pro residues; the sequence is PPPPPTGLPRGPPPPPSPPRGL. Residues 65–76 show a composition bias toward low complexity; sequence EPPVASGPTAGA. The segment covering 214–223 has biased composition (acidic residues); sequence EDEPSGDGEQ. Residues 572–587 show a composition bias toward basic and acidic residues; the sequence is PQVEKEKVKKTEDRLN. Low complexity predominate over residues 624–633; sequence SSESYSSPSS. Residues 634–653 show a composition bias toward basic and acidic residues; it reads PRHDGRESLESEEEKDRDSD. Polar residues predominate over residues 919–947; sequence LPTQNSSALNAATSAQPASTGISPSQSTV. A compositionally biased stretch (pro residues) spans 949–963; it reads PAVPTHTPGPAPSPS. A compositionally biased stretch (polar residues) spans 964 to 982; sequence PALTHSTAQSDSTSYISAV. The segment at 1119-1136 adopts a CCHC-type zinc-finger fold; sequence VSCYNCGVSGHYAQDCKQ.

The sequence is that of Zinc finger CCHC domain-containing protein 2 (Zcchc2) from Mus musculus (Mouse).